The sequence spans 141 residues: Putative antiporter subunit mnhB2 (141 aa).

Transmembrane regions (helical) follow at residues 10 to 30 (TVTK…FLAG), 35 to 55 (GGGF…FLAF), 70 to 90 (ILMI…MFFG), and 116 to 136 (VFEA…MLSI).

Belongs to the CPA3 antiporters (TC 2.A.63) subunit B family. In terms of assembly, may form a heterooligomeric complex that consists of seven subunits: mnhA2, mnhB2, mnhC2, mnhD2, mnhE2, mnhF2 and mnhG2.

The protein resides in the cell membrane. The chain is Putative antiporter subunit mnhB2 (mnhB2) from Staphylococcus saprophyticus subsp. saprophyticus (strain ATCC 15305 / DSM 20229 / NCIMB 8711 / NCTC 7292 / S-41).